Consider the following 458-residue polypeptide: Adenylosuccinate synthetase (458 aa).

Residues 11–17 (GDEGKGG) and 39–41 (GHT) contribute to the GTP site. The Proton acceptor role is filled by Asp12. The Mg(2+) site is built by Asp12 and Gly39. IMP-binding positions include 12–15 (DEGK), 37–40 (NAGH), Thr127, Arg141, Gln232, Thr247, and Arg330. The active-site Proton donor is the His40. Residue 326–332 (TVTGRPR) coordinates substrate. GTP-binding positions include Arg332, 358 to 360 (HLD), and 443 to 445 (GVG).

It belongs to the adenylosuccinate synthetase family. Homodimer. The cofactor is Mg(2+).

The protein resides in the cytoplasm. It catalyses the reaction IMP + L-aspartate + GTP = N(6)-(1,2-dicarboxyethyl)-AMP + GDP + phosphate + 2 H(+). It functions in the pathway purine metabolism; AMP biosynthesis via de novo pathway; AMP from IMP: step 1/2. Plays an important role in the de novo pathway of purine nucleotide biosynthesis. Catalyzes the first committed step in the biosynthesis of AMP from IMP. In Haloarcula marismortui (strain ATCC 43049 / DSM 3752 / JCM 8966 / VKM B-1809) (Halobacterium marismortui), this protein is Adenylosuccinate synthetase.